A 229-amino-acid chain; its full sequence is Uracil-DNA glycosylase (229 aa).

The Proton acceptor role is filled by D70.

Belongs to the uracil-DNA glycosylase (UDG) superfamily. UNG family.

The protein localises to the cytoplasm. The enzyme catalyses Hydrolyzes single-stranded DNA or mismatched double-stranded DNA and polynucleotides, releasing free uracil.. In terms of biological role, excises uracil residues from the DNA which can arise as a result of misincorporation of dUMP residues by DNA polymerase or due to deamination of cytosine. This chain is Uracil-DNA glycosylase, found in Chlamydia trachomatis serovar L2b (strain UCH-1/proctitis).